Here is a 72-residue protein sequence, read N- to C-terminus: Palustrin-2CG1 (72 aa).

An N-terminal signal peptide occupies residues Met-1 to Cys-22. The propeptide at Gln-23–Val-39 is removed in mature form. Cys-64 and Cys-70 form a disulfide bridge.

In terms of tissue distribution, expressed by the skin glands.

Its subcellular location is the secreted. Its function is as follows. Antimicrobial peptide active against a variety of Gram-positive and some Gram-negative bacterial strains. Has antifungal activity against a slime mold isolate. Has hemolytic activity against human erythrocytes. This is Palustrin-2CG1 from Amolops chunganensis (Chungan torrent frog).